A 158-amino-acid chain; its full sequence is Crossover junction endodeoxyribonuclease RuvC (158 aa).

Residues Asp-7, Glu-66, and Asp-139 contribute to the active site. Mg(2+)-binding residues include Asp-7, Glu-66, and Asp-139.

The protein belongs to the RuvC family. As to quaternary structure, homodimer which binds Holliday junction (HJ) DNA. The HJ becomes 2-fold symmetrical on binding to RuvC with unstacked arms; it has a different conformation from HJ DNA in complex with RuvA. In the full resolvosome a probable DNA-RuvA(4)-RuvB(12)-RuvC(2) complex forms which resolves the HJ. The cofactor is Mg(2+).

It localises to the cytoplasm. The enzyme catalyses Endonucleolytic cleavage at a junction such as a reciprocal single-stranded crossover between two homologous DNA duplexes (Holliday junction).. In terms of biological role, the RuvA-RuvB-RuvC complex processes Holliday junction (HJ) DNA during genetic recombination and DNA repair. Endonuclease that resolves HJ intermediates. Cleaves cruciform DNA by making single-stranded nicks across the HJ at symmetrical positions within the homologous arms, yielding a 5'-phosphate and a 3'-hydroxyl group; requires a central core of homology in the junction. The consensus cleavage sequence is 5'-(A/T)TT(C/G)-3'. Cleavage occurs on the 3'-side of the TT dinucleotide at the point of strand exchange. HJ branch migration catalyzed by RuvA-RuvB allows RuvC to scan DNA until it finds its consensus sequence, where it cleaves and resolves the cruciform DNA. The protein is Crossover junction endodeoxyribonuclease RuvC of Campylobacter lari (strain RM2100 / D67 / ATCC BAA-1060).